The chain runs to 92 residues: Long neurotoxin 73 (92 aa).

A signal peptide spans 1 to 21; sequence MKTLLLTLVVVTIVCLDLGDS. Disulfide bonds link Cys24–Cys41, Cys34–Cys62, Cys47–Cys51, Cys66–Cys77, and Cys78–Cys83.

It belongs to the three-finger toxin family. Long-chain subfamily. Type II alpha-neurotoxin sub-subfamily. As to expression, expressed by the venom gland.

The protein localises to the secreted. Functionally, binds with high affinity to muscular (alpha-1/CHRNA1) and neuronal (alpha-7/CHRNA7) nicotinic acetylcholine receptor (nAChR) and inhibits acetylcholine from binding to the receptor, thereby impairing neuromuscular and neuronal transmission. The sequence is that of Long neurotoxin 73 from Drysdalia coronoides (White-lipped snake).